A 120-amino-acid chain; its full sequence is MIKMVIVVRSDIKMGKGKIAAQVAHAAVTLVVSIINSNNLRWKEWLNEWLHQGQPKIIVKVNSLDEIISRAKKAETMNLPFSIIEDAGKTQLEPGTITCLGIGPAPENLVDSITGDLKLL.

It belongs to the PTH2 family. Homodimer.

The protein resides in the cytoplasm. The enzyme catalyses an N-acyl-L-alpha-aminoacyl-tRNA + H2O = an N-acyl-L-amino acid + a tRNA + H(+). Functionally, the natural substrate for this enzyme may be peptidyl-tRNAs which drop off the ribosome during protein synthesis. The polypeptide is Peptidyl-tRNA hydrolase (Saccharolobus solfataricus (strain ATCC 35092 / DSM 1617 / JCM 11322 / P2) (Sulfolobus solfataricus)).